We begin with the raw amino-acid sequence, 355 residues long: UDP-N-acetylglucosamine--N-acetylmuramyl-(pentapeptide) pyrophosphoryl-undecaprenol N-acetylglucosamine transferase (355 aa).

Residues 15–17 (TGG), Asn127, Arg163, Ser191, Ile245, 264–269 (ALTVSE), and Gln289 contribute to the UDP-N-acetyl-alpha-D-glucosamine site.

This sequence belongs to the glycosyltransferase 28 family. MurG subfamily.

Its subcellular location is the cell inner membrane. It catalyses the reaction di-trans,octa-cis-undecaprenyl diphospho-N-acetyl-alpha-D-muramoyl-L-alanyl-D-glutamyl-meso-2,6-diaminopimeloyl-D-alanyl-D-alanine + UDP-N-acetyl-alpha-D-glucosamine = di-trans,octa-cis-undecaprenyl diphospho-[N-acetyl-alpha-D-glucosaminyl-(1-&gt;4)]-N-acetyl-alpha-D-muramoyl-L-alanyl-D-glutamyl-meso-2,6-diaminopimeloyl-D-alanyl-D-alanine + UDP + H(+). Its pathway is cell wall biogenesis; peptidoglycan biosynthesis. In terms of biological role, cell wall formation. Catalyzes the transfer of a GlcNAc subunit on undecaprenyl-pyrophosphoryl-MurNAc-pentapeptide (lipid intermediate I) to form undecaprenyl-pyrophosphoryl-MurNAc-(pentapeptide)GlcNAc (lipid intermediate II). The chain is UDP-N-acetylglucosamine--N-acetylmuramyl-(pentapeptide) pyrophosphoryl-undecaprenol N-acetylglucosamine transferase from Yersinia enterocolitica serotype O:8 / biotype 1B (strain NCTC 13174 / 8081).